The following is a 61-amino-acid chain: Beta-insect depressant toxin BmKIT2 (61 aa).

The LCN-type CS-alpha/beta domain maps to 1 to 61 (DGYIKGKSGC…TWKSESNTCG (61 aa)). Cystine bridges form between Cys10-Cys60, Cys14-Cys35, Cys21-Cys42, and Cys25-Cys44. The residue at position 61 (Gly61) is a Glycine amide.

This sequence belongs to the long (4 C-C) scorpion toxin superfamily. Sodium channel inhibitor family. Beta subfamily. In terms of tissue distribution, expressed by the venom gland.

Its subcellular location is the secreted. In terms of biological role, on insects, this depressant beta-toxins cause a transient contraction paralysis followed by a slow flaccid paralysis. They bind voltage-independently at site-4 of sodium channels (Nav) and shift the voltage of activation toward more negative potentials thereby affecting sodium channel activation and promoting spontaneous and repetitive firing. This toxin is active against insects and mammals. It is capable of binding to not only cockroach neuronal membranes, but also rat cerebrocortical and hippocampal synaptosomes. This toxin also has potent peripheral and central suppressive effects on rat nociceptive spontaneous responses, thermal hyperalgesia and spinal c-Fos expression induced by formalin and carrageenan, which may be derived from its modulation on the activity of sodium channels of the neurons. Administration of BmKIT2 into rat brain can also suppress the epileptic seizures significantly. The polypeptide is Beta-insect depressant toxin BmKIT2 (Olivierus martensii (Manchurian scorpion)).